The sequence spans 585 residues: ATP-dependent lipid A-core flippase (585 aa).

6 helical membrane-spanning segments follow: residues phenylalanine 25–isoleucine 45, tryptophan 63–leucine 83, isoleucine 127–isoleucine 146, leucine 150–threonine 170, glutamine 250–leucine 270, and glutamine 277–leucine 297. The ABC transmembrane type-1 domain maps to leucine 26–arginine 309. Residues valine 341–methionine 577 form the ABC transporter domain. Glycine 375–threonine 382 provides a ligand contact to ATP.

This sequence belongs to the ABC transporter superfamily. Lipid exporter (TC 3.A.1.106) family. Homodimer.

The protein localises to the cell inner membrane. It carries out the reaction ATP + H2O + lipid A-core oligosaccharideSide 1 = ADP + phosphate + lipid A-core oligosaccharideSide 2.. Involved in lipopolysaccharide (LPS) biosynthesis. Translocates lipid A-core from the inner to the outer leaflet of the inner membrane. Transmembrane domains (TMD) form a pore in the inner membrane and the ATP-binding domain (NBD) is responsible for energy generation. This Dechloromonas aromatica (strain RCB) protein is ATP-dependent lipid A-core flippase.